We begin with the raw amino-acid sequence, 745 residues long: DNA ligase (745 aa).

The disordered stretch occupies residues 1–27 (MRNHGPGSERKDACVSAPDPTFSDDVP). Residues 57–61 (DAEYD), 106–107 (SL), and E135 each bind NAD(+). The active-site N6-AMP-lysine intermediate is the K137. R158 and E197 together coordinate NAD(+). Residues 216–235 (GKPPFANPRNAAAGSLRQKD) are disordered. Residues K313 and K337 each contribute to the NAD(+) site. 4 residues coordinate Zn(2+): C431, C434, C450, and C456. One can recognise a BRCT domain in the interval 649–738 (DGPRLLDGIT…PEAARAARLS (90 aa)).

Belongs to the NAD-dependent DNA ligase family. LigA subfamily. It depends on Mg(2+) as a cofactor. Mn(2+) is required as a cofactor.

The enzyme catalyses NAD(+) + (deoxyribonucleotide)n-3'-hydroxyl + 5'-phospho-(deoxyribonucleotide)m = (deoxyribonucleotide)n+m + AMP + beta-nicotinamide D-nucleotide.. Its function is as follows. DNA ligase that catalyzes the formation of phosphodiester linkages between 5'-phosphoryl and 3'-hydroxyl groups in double-stranded DNA using NAD as a coenzyme and as the energy source for the reaction. It is essential for DNA replication and repair of damaged DNA. This chain is DNA ligase, found in Thermobifida fusca (strain YX).